Reading from the N-terminus, the 92-residue chain is Small ribosomal subunit protein bS18 (92 aa).

It belongs to the bacterial ribosomal protein bS18 family. Part of the 30S ribosomal subunit. Forms a tight heterodimer with protein bS6.

Functionally, binds as a heterodimer with protein bS6 to the central domain of the 16S rRNA, where it helps stabilize the platform of the 30S subunit. The chain is Small ribosomal subunit protein bS18 from Pelagibacter ubique (strain HTCC1062).